The primary structure comprises 190 residues: MQVILLERVAKLGQMGDVVKVRDGYARNFLLPQGKALRANDANIKSFEARKAQLEARNLETKKEAEAAAAKLEGQKFVVIRSASDAGALYGSVTPRDAAEAATAGGFSVDKRQVALKAPIKELGLHDVHVILHPEVQATITINVARSAEEAAIQAAGKSIQQLAAEADAAAEFEIAELFDEVGAAASDDE.

The protein belongs to the bacterial ribosomal protein bL9 family.

In terms of biological role, binds to the 23S rRNA. In Rhodobacter capsulatus (strain ATCC BAA-309 / NBRC 16581 / SB1003), this protein is Large ribosomal subunit protein bL9.